Consider the following 144-residue polypeptide: Large ribosomal subunit protein uL13 (144 aa).

This sequence belongs to the universal ribosomal protein uL13 family. In terms of assembly, part of the 50S ribosomal subunit.

In terms of biological role, this protein is one of the early assembly proteins of the 50S ribosomal subunit, although it is not seen to bind rRNA by itself. It is important during the early stages of 50S assembly. The polypeptide is Large ribosomal subunit protein uL13 (Clostridium botulinum (strain Alaska E43 / Type E3)).